Reading from the N-terminus, the 115-residue chain is Hydrogenase maturation factor HypA (115 aa).

A Ni(2+)-binding site is contributed by His2. Residues Cys73, Cys76, Cys89, and Cys92 each contribute to the Zn(2+) site.

Belongs to the HypA/HybF family.

In terms of biological role, involved in the maturation of [NiFe] hydrogenases. Required for nickel insertion into the metal center of the hydrogenase. The chain is Hydrogenase maturation factor HypA from Aquifex aeolicus (strain VF5).